Reading from the N-terminus, the 132-residue chain is Small ribosomal subunit protein uS8 (132 aa).

This sequence belongs to the universal ribosomal protein uS8 family. Part of the 30S ribosomal subunit. Contacts proteins S5 and S12.

Functionally, one of the primary rRNA binding proteins, it binds directly to 16S rRNA central domain where it helps coordinate assembly of the platform of the 30S subunit. This is Small ribosomal subunit protein uS8 from Pseudarthrobacter chlorophenolicus (strain ATCC 700700 / DSM 12829 / CIP 107037 / JCM 12360 / KCTC 9906 / NCIMB 13794 / A6) (Arthrobacter chlorophenolicus).